The chain runs to 323 residues: Mitochondrial glutamate carrier 1 (323 aa).

Solcar repeat units follow at residues 6–93 (ISLP…FRHQ), 101–214 (LTLP…LNQL), and 223–312 (SPFY…GIAE). 6 helical membrane-spanning segments follow: residues 12-32 (LINGGIAGLIGVTCVFPIDLA), 62-82 (YFGMYRGAAVNLTLVTPEKAI), 107-127 (MLAGCGAGTCQVIVTTPMEML), 189-209 (GLGATLLRDVPFSIVYFPLFA), 223-243 (SPFYVSFLAGCVAGSAAAVAV), and 292-312 (ALVIAPLFGIAQVVYFLGIAE).

This sequence belongs to the mitochondrial carrier (TC 2.A.29) family.

The protein resides in the mitochondrion inner membrane. It catalyses the reaction L-glutamate(in) + H(+)(in) = L-glutamate(out) + H(+)(out). Mitochondrial glutamate/H(+) symporter. Responsible for the transport of glutamate from the cytosol into the mitochondrial matrix with the concomitant import of a proton. Plays a role in the control of glucose-stimulated insulin secretion. In Mus musculus (Mouse), this protein is Mitochondrial glutamate carrier 1 (Slc25a22).